Consider the following 389-residue polypeptide: Transaldolase (389 aa).

Lys136 functions as the Schiff-base intermediate with substrate in the catalytic mechanism. EF-hand domains follow at residues 330–365 and 365–388; these read ALNQ…FDAI and IDLN…VSKL. Residues Asp343, Asp345, Asp347, Glu354, Asp366, Asn368, Asp370, Lys372, and Glu377 each coordinate Ca(2+).

It belongs to the transaldolase family. Type 1 subfamily.

It is found in the cytoplasm. The enzyme catalyses D-sedoheptulose 7-phosphate + D-glyceraldehyde 3-phosphate = D-erythrose 4-phosphate + beta-D-fructose 6-phosphate. It participates in carbohydrate degradation; pentose phosphate pathway; D-glyceraldehyde 3-phosphate and beta-D-fructose 6-phosphate from D-ribose 5-phosphate and D-xylulose 5-phosphate (non-oxidative stage): step 2/3. Transaldolase is important for the balance of metabolites in the pentose-phosphate pathway. This is Transaldolase from Gloeobacter violaceus (strain ATCC 29082 / PCC 7421).